A 130-amino-acid chain; its full sequence is Splicing regulatory small protein (130 aa).

Over residues 1–10 (MRTKPQRPRA) the composition is skewed to basic residues. Disordered regions lie at residues 1-29 (MRTK…EETG) and 74-130 (GRAL…STRR). The mediates interaction with SRSF3 stretch occupies residues 16–22 (GQPCGSP). Basic and acidic residues predominate over residues 77–98 (LEPKADPHTCPYGRKESRGEKV). Positions 120-130 (SLKSGSPSTRR) are enriched in polar residues.

Interacts with SRSF3; increases SRSF3 binding to specific exons.

The protein resides in the nucleus. Functionally, interacts with the splicing factor SRSF3 and increases its binding to specific exons within pre-mRNA, thereby regulating exon-inclusion during alternative splicing. Does not directly bind pre-mRNA and could regulate a wider range of splicing factors through a similar mechanism. The sequence is that of Splicing regulatory small protein from Homo sapiens (Human).